A 703-amino-acid chain; its full sequence is Hyperosmolality-gated Ca2+ permeable channel 2.3 (703 aa).

Topologically, residues M1 to L3 are extracellular. The chain crosses the membrane as a helical span at residues S4–I26. Over L27–L81 the chain is Cytoplasmic. The chain crosses the membrane as a helical span at residues G82–Y115. Over M116 to S143 the chain is Extracellular. The helical transmembrane segment at N144–Y165 threads the bilayer. Over Y166–S355 the chain is Cytoplasmic. Residues R228 to E300 adopt a coiled-coil conformation. Residues N356 to N382 form a helical membrane-spanning segment. Residues L383–L410 lie on the Extracellular side of the membrane. The helical transmembrane segment at P411–M432 threads the bilayer. Residues Q433–I436 lie on the Cytoplasmic side of the membrane. A helical membrane pass occupies residues S437–L463. Residues S464 to P489 lie on the Extracellular side of the membrane. A helical transmembrane segment spans residues A490–L512. Residues R513–P540 lie on the Cytoplasmic side of the membrane. Residues F541–L561 traverse the membrane as a helical segment. S562 is a topological domain (extracellular). Residues P563–N586 traverse the membrane as a helical segment. The Cytoplasmic segment spans residues V587–F598. The helical transmembrane segment at W599–L623 threads the bilayer. The Extracellular segment spans residues K624–L626. The chain crosses the membrane as a helical span at residues P627–F655. Residues K656–P703 lie on the Cytoplasmic side of the membrane.

The protein belongs to the CSC1 (TC 1.A.17) family. In terms of assembly, homodimer.

Its subcellular location is the membrane. Its function is as follows. Acts as an osmosensitive calcium-permeable cation channel. The chain is Hyperosmolality-gated Ca2+ permeable channel 2.3 from Arabidopsis thaliana (Mouse-ear cress).